A 440-amino-acid chain; its full sequence is APO protein 2, chloroplastic (440 aa).

A chloroplast-targeting transit peptide spans 1–62; that stretch reads MSITYSAISF…SLQLNSRVVL (62 aa). Residues 106–115 are compositionally biased toward basic and acidic residues; that stretch reads ARERVKNNKD. The segment at 106–126 is disordered; that stretch reads ARERVKNNKDKPKRPLPPPKN. APO domains follow at residues 162–247 and 332–417; these read ACGW…EIPE and VCGY…VVPE.

The protein belongs to the APO family.

It localises to the plastid. The protein resides in the chloroplast. May be involved in the stable assembly of several 4Fe-4S cluster-containing complexes of chloroplasts. In Arabidopsis thaliana (Mouse-ear cress), this protein is APO protein 2, chloroplastic (APO2).